Consider the following 121-residue polypeptide: MARIAGVNIPNHQHTVIGLTAIFGIGTTRAHQICKTTGVAIDKKVKDLIDADLEKLRDEVGKFVTEGDLRREVTMSIKRLMDLGCYRGVRHRKDLPVRGQRTKTNARTRKGPRKSGVQLKK.

Positions 94–121 (DLPVRGQRTKTNARTRKGPRKSGVQLKK) are disordered. Over residues 100-121 (QRTKTNARTRKGPRKSGVQLKK) the composition is skewed to basic residues.

Belongs to the universal ribosomal protein uS13 family. In terms of assembly, part of the 30S ribosomal subunit. Forms a loose heterodimer with protein S19. Forms two bridges to the 50S subunit in the 70S ribosome.

Located at the top of the head of the 30S subunit, it contacts several helices of the 16S rRNA. In the 70S ribosome it contacts the 23S rRNA (bridge B1a) and protein L5 of the 50S subunit (bridge B1b), connecting the 2 subunits; these bridges are implicated in subunit movement. Contacts the tRNAs in the A and P-sites. This Polynucleobacter necessarius subsp. necessarius (strain STIR1) protein is Small ribosomal subunit protein uS13.